Consider the following 473-residue polypeptide: Rop guanine nucleotide exchange factor 3 (473 aa).

Positions 1–28 (MENLSNPDENDDHQSPRSIDQNDQSAVE) are disordered. The span at 16–28 (PRSIDQNDQSAVE) shows a compositional bias: polar residues. The PRONE domain maps to 95–473 (LVVQEISEPE…YVDKTMRGSE (379 aa)).

In terms of biological role, guanine-nucleotide exchange factor (GEF) that acts as an activator of Rop (Rho of plants) GTPases by promoting the exchange of GDP for GTP. The protein is Rop guanine nucleotide exchange factor 3 (ROPGEF3) of Arabidopsis thaliana (Mouse-ear cress).